A 239-amino-acid chain; its full sequence is Ribosomal RNA large subunit methyltransferase E (239 aa).

Gly-81, Trp-83, Asp-104, Asp-120, and Asp-144 together coordinate S-adenosyl-L-methionine. The active-site Proton acceptor is Lys-184.

Belongs to the class I-like SAM-binding methyltransferase superfamily. RNA methyltransferase RlmE family.

It localises to the cytoplasm. It catalyses the reaction uridine(2552) in 23S rRNA + S-adenosyl-L-methionine = 2'-O-methyluridine(2552) in 23S rRNA + S-adenosyl-L-homocysteine + H(+). In terms of biological role, specifically methylates the uridine in position 2552 of 23S rRNA at the 2'-O position of the ribose in the fully assembled 50S ribosomal subunit. This chain is Ribosomal RNA large subunit methyltransferase E, found in Rhizobium rhizogenes (strain K84 / ATCC BAA-868) (Agrobacterium radiobacter).